Here is a 412-residue protein sequence, read N- to C-terminus: MALKISPLSPQNIQELPPLSGVRIATAEAGIRDKGRTDLLFIVFDAPTSVAGVFTRSKCPSASVDHCRASLSHGVARGVVVNSGNANAFTGRKGKQTADAILHAAASALKVKENEIFIASTGVIGEPLEASSIVNLLPSMAETAEEGNWLEAARAIMTTDTFPKLATRKFYCGGKTVTINGIAKGAGMIAPDMATMLSFVVSDAAISSDILQSMLSEAVQGSFNSITVDSDTSTSDTLMMFATGKVKGNFPCFTSKSDPCYEVFSRQLSALLHELALQVVCDGEGARHLIEVCVTGATTENAAKTIALSIANSPLVKTAIAGEDANWGRVVMAVGKAGVEVDRDLLTIWFGEHRLAINGERDPDYHEEAISAYMRGKHITIRVDIGLGSGKATVWSCDLTKEYVMINGDYRS.

Residues Thr158, Lys184, Thr195, Glu284, Asn407, and Ser412 each coordinate substrate. Thr195 (nucleophile) is an active-site residue.

The protein belongs to the ArgJ family. In terms of assembly, heterotetramer of two alpha and two beta chains.

The protein localises to the cytoplasm. It catalyses the reaction N(2)-acetyl-L-ornithine + L-glutamate = N-acetyl-L-glutamate + L-ornithine. The enzyme catalyses L-glutamate + acetyl-CoA = N-acetyl-L-glutamate + CoA + H(+). It participates in amino-acid biosynthesis; L-arginine biosynthesis; L-ornithine and N-acetyl-L-glutamate from L-glutamate and N(2)-acetyl-L-ornithine (cyclic): step 1/1. The protein operates within amino-acid biosynthesis; L-arginine biosynthesis; N(2)-acetyl-L-ornithine from L-glutamate: step 1/4. Catalyzes two activities which are involved in the cyclic version of arginine biosynthesis: the synthesis of N-acetylglutamate from glutamate and acetyl-CoA as the acetyl donor, and of ornithine by transacetylation between N(2)-acetylornithine and glutamate. This is Arginine biosynthesis bifunctional protein ArgJ from Bartonella quintana (strain Toulouse) (Rochalimaea quintana).